The primary structure comprises 320 residues: Ferrochelatase (320 aa).

Residues H194 and E275 each coordinate Fe cation.

Belongs to the ferrochelatase family. In terms of assembly, monomer.

The protein resides in the cytoplasm. It carries out the reaction heme b + 2 H(+) = protoporphyrin IX + Fe(2+). The protein operates within porphyrin-containing compound metabolism; protoheme biosynthesis; protoheme from protoporphyrin-IX: step 1/1. Its function is as follows. Catalyzes the ferrous insertion into protoporphyrin IX. The protein is Ferrochelatase of Shigella dysenteriae serotype 1 (strain Sd197).